Consider the following 517-residue polypeptide: GMP synthase [glutamine-hydrolyzing] (517 aa).

One can recognise a Glutamine amidotransferase type-1 domain in the interval Arg9–Leu199. The active-site Nucleophile is Cys86. Residues His173 and Glu175 contribute to the active site. The 193-residue stretch at Trp200 to Arg392 folds into the GMPS ATP-PPase domain. Ser227 to Ser233 is an ATP binding site.

Homodimer.

It carries out the reaction XMP + L-glutamine + ATP + H2O = GMP + L-glutamate + AMP + diphosphate + 2 H(+). Its pathway is purine metabolism; GMP biosynthesis; GMP from XMP (L-Gln route): step 1/1. In terms of biological role, catalyzes the synthesis of GMP from XMP. The polypeptide is GMP synthase [glutamine-hydrolyzing] (Aliivibrio salmonicida (strain LFI1238) (Vibrio salmonicida (strain LFI1238))).